The following is a 316-amino-acid chain: Transaldolase A (316 aa).

Residue Lys-131 is the Schiff-base intermediate with substrate of the active site.

This sequence belongs to the transaldolase family. Type 1 subfamily. In terms of assembly, homodimer.

It localises to the cytoplasm. The enzyme catalyses D-sedoheptulose 7-phosphate + D-glyceraldehyde 3-phosphate = D-erythrose 4-phosphate + beta-D-fructose 6-phosphate. Its pathway is carbohydrate degradation; pentose phosphate pathway; D-glyceraldehyde 3-phosphate and beta-D-fructose 6-phosphate from D-ribose 5-phosphate and D-xylulose 5-phosphate (non-oxidative stage): step 2/3. Functionally, transaldolase is important for the balance of metabolites in the pentose-phosphate pathway. This is Transaldolase A from Salmonella typhimurium (strain LT2 / SGSC1412 / ATCC 700720).